We begin with the raw amino-acid sequence, 514 residues long: Prolyl 3,4-dihydroxylase OGFOD1 (514 aa).

Residues 114 to 221 (GAVDCSCNIY…RVSISGWFHT (108 aa)) form the Fe2OG dioxygenase domain. Fe cation is bound by residues His132 and Asp134. Tyr146 lines the 2-oxoglutarate pocket. Fe cation is bound at residue His200. Arg212 provides a ligand contact to 2-oxoglutarate.

It belongs to the TPA1 family. In terms of assembly, monomer and homodimer. It depends on Fe(2+) as a cofactor. Requires L-ascorbate as cofactor.

It carries out the reaction [ribosomal protein uS12]-L-proline + 2-oxoglutarate + O2 = [ribosomal protein uS12]-(3S)-3-hydroxy-L-proline + succinate + CO2. It catalyses the reaction [ribosomal protein uS12]-(3S)-3-hydroxy-L-proline + 2-oxoglutarate + O2 = [ribosomal protein uS12]-(3S)-3,4-dihydroxy-L-proline + succinate + CO2. In terms of biological role, prolyl 3,4-dihydroxylase that catalyzes 3,4-dihydroxylation of 'Pro-61' of small ribosomal subunit uS12 (RPS23), thereby regulating protein translation termination efficiency. The chain is Prolyl 3,4-dihydroxylase OGFOD1 (Ogd) from Ostreococcus tauri.